Reading from the N-terminus, the 186-residue chain is Probable nicotinate-nucleotide adenylyltransferase (186 aa).

It belongs to the NadD family.

The catalysed reaction is nicotinate beta-D-ribonucleotide + ATP + H(+) = deamido-NAD(+) + diphosphate. Its pathway is cofactor biosynthesis; NAD(+) biosynthesis; deamido-NAD(+) from nicotinate D-ribonucleotide: step 1/1. In terms of biological role, catalyzes the reversible adenylation of nicotinate mononucleotide (NaMN) to nicotinic acid adenine dinucleotide (NaAD). This Thermus thermophilus (strain ATCC 27634 / DSM 579 / HB8) protein is Probable nicotinate-nucleotide adenylyltransferase.